A 358-amino-acid polypeptide reads, in one-letter code: Homoserine O-acetyltransferase (358 aa).

The 303-residue stretch at 41 to 343 folds into the AB hydrolase-1 domain; it reads NAVLICHALT…DYGHDAFLVD (303 aa). Ser-143 acts as the Nucleophile in catalysis. A substrate-binding site is contributed by Arg-212. Active-site residues include Asp-304 and His-337. Substrate is bound at residue Asp-338.

In terms of assembly, homodimer.

Its subcellular location is the cytoplasm. It carries out the reaction L-homoserine + acetyl-CoA = O-acetyl-L-homoserine + CoA. It functions in the pathway amino-acid biosynthesis; L-methionine biosynthesis via de novo pathway; O-acetyl-L-homoserine from L-homoserine: step 1/1. Functionally, transfers an acetyl group from acetyl-CoA to L-homoserine, forming acetyl-L-homoserine. Utilizes a ping-pong kinetic mechanism in which the acetyl group of acetyl-CoA is initially transferred to the enzyme to form an acetyl-enzyme intermediate before subsequent transfer to homoserine to form the final product, O-acetylhomoserine. The chain is Homoserine O-acetyltransferase from Haemophilus influenzae (strain ATCC 51907 / DSM 11121 / KW20 / Rd).